A 288-amino-acid polypeptide reads, in one-letter code: UTP--glucose-1-phosphate uridylyltransferase (288 aa).

It belongs to the UDPGP type 2 family.

It catalyses the reaction alpha-D-glucose 1-phosphate + UTP + H(+) = UDP-alpha-D-glucose + diphosphate. It functions in the pathway glycolipid metabolism; diglucosyl-diacylglycerol biosynthesis. Catalyzes the formation of UDP-glucose from glucose-1-phosphate and UTP. This is an intermediate step in the biosynthesis of diglucosyl-diacylglycerol (Glc2-DAG), i.e. the predominant glycolipid found in the S.aureus membrane, which is also used as a membrane anchor for lipoteichoic acid (LTA). This chain is UTP--glucose-1-phosphate uridylyltransferase (gtaB), found in Staphylococcus aureus (strain MSSA476).